We begin with the raw amino-acid sequence, 237 residues long: Pyridoxine 5'-phosphate synthase (237 aa).

3-amino-2-oxopropyl phosphate is bound by residues N7 and R18. The Proton acceptor role is filled by H43. 2 residues coordinate 1-deoxy-D-xylulose 5-phosphate: R45 and H50. The active-site Proton acceptor is E70. 1-deoxy-D-xylulose 5-phosphate is bound at residue T100. Residue H190 is the Proton donor of the active site. Residues D191 and 213 to 214 (GH) each bind 3-amino-2-oxopropyl phosphate.

Belongs to the PNP synthase family. Homooctamer; tetramer of dimers.

It localises to the cytoplasm. It carries out the reaction 3-amino-2-oxopropyl phosphate + 1-deoxy-D-xylulose 5-phosphate = pyridoxine 5'-phosphate + phosphate + 2 H2O + H(+). It participates in cofactor biosynthesis; pyridoxine 5'-phosphate biosynthesis; pyridoxine 5'-phosphate from D-erythrose 4-phosphate: step 5/5. Functionally, catalyzes the complicated ring closure reaction between the two acyclic compounds 1-deoxy-D-xylulose-5-phosphate (DXP) and 3-amino-2-oxopropyl phosphate (1-amino-acetone-3-phosphate or AAP) to form pyridoxine 5'-phosphate (PNP) and inorganic phosphate. This chain is Pyridoxine 5'-phosphate synthase, found in Flavobacterium johnsoniae (strain ATCC 17061 / DSM 2064 / JCM 8514 / BCRC 14874 / CCUG 350202 / NBRC 14942 / NCIMB 11054 / UW101) (Cytophaga johnsonae).